A 341-amino-acid polypeptide reads, in one-letter code: L-threonine 3-dehydrogenase (341 aa).

C38 contacts Zn(2+). Active-site charge relay system residues include T40 and H43. Positions 63, 64, 93, 96, 99, and 107 each coordinate Zn(2+). Residues I175, D195, R200, 262–264 (LGI), and 286–287 (IY) each bind NAD(+).

Belongs to the zinc-containing alcohol dehydrogenase family. In terms of assembly, homotetramer. The cofactor is Zn(2+).

The protein localises to the cytoplasm. The catalysed reaction is L-threonine + NAD(+) = (2S)-2-amino-3-oxobutanoate + NADH + H(+). It participates in amino-acid degradation; L-threonine degradation via oxydo-reductase pathway; glycine from L-threonine: step 1/2. In terms of biological role, catalyzes the NAD(+)-dependent oxidation of L-threonine to 2-amino-3-ketobutyrate. This chain is L-threonine 3-dehydrogenase, found in Shewanella oneidensis (strain ATCC 700550 / JCM 31522 / CIP 106686 / LMG 19005 / NCIMB 14063 / MR-1).